A 782-amino-acid polypeptide reads, in one-letter code: Endonuclease MutS2 (782 aa).

Residue 336–343 (GPNTGGKT) coordinates ATP. The region spanning 707–782 (LDLRGYRYED…GFGVTVATLK (76 aa)) is the Smr domain.

It belongs to the DNA mismatch repair MutS family. MutS2 subfamily. As to quaternary structure, homodimer. Binds to stalled ribosomes, contacting rRNA.

In terms of biological role, endonuclease that is involved in the suppression of homologous recombination and thus may have a key role in the control of bacterial genetic diversity. Functionally, acts as a ribosome collision sensor, splitting the ribosome into its 2 subunits. Detects stalled/collided 70S ribosomes which it binds and splits by an ATP-hydrolysis driven conformational change. Acts upstream of the ribosome quality control system (RQC), a ribosome-associated complex that mediates the extraction of incompletely synthesized nascent chains from stalled ribosomes and their subsequent degradation. Probably generates substrates for RQC. This is Endonuclease MutS2 from Staphylococcus aureus (strain JH1).